Here is a 37-residue protein sequence, read N- to C-terminus: Alpha-conotoxin TxID (37 aa).

The propeptide occupies 1 to 21 (FDGRNAAGNDKMSALMALTTR). Cystine bridges form between cysteine 23–cysteine 29 and cysteine 24–cysteine 36. Cysteine 36 is subject to Cysteine amide.

The protein belongs to the conotoxin A superfamily. Unmodified Met-32 is essential for toxin binding to rat alpha-3-beta-4/CHRNA3-CHRNB4 nAChR. An oxidation of this methionine provokes a 13.3-fold decrease in inhibitory potency (IC(50)=245 nM instead of 18 nM). Owing to its potent activity, derivatives of this toxin have a potential in the development of a novel drug. Unfortunately, the oxidation of the methionine is readily to happen during toxin synthesis and oxidation steps as well as under oxidative environment in vivo, which should still be considered to find a solution to this major drawback. Expressed by the venom duct.

It localises to the secreted. Functionally, alpha-conotoxins act on postsynaptic membranes, they bind to the nicotinic acetylcholine receptors (nAChR) and thus inhibit them. This toxin inhibits alpha-3-beta-4/CHRNA3-CHRNB4 (IC(50)=3.6-18.38 nM), alpha-6/alpha-3-beta-4 (CHRNA6/CHRNA3-CHRNB4) (IC(50)=33.9-94.1 nM), and alpha-2-beta-4/CHRNA2-CHRNB4 (IC(50)=4550 nM) nAChRs. The toxin competes with agonists in the orthosteric binding site of alpha-3-beta-4/CHRNA3-CHRNB4 and alpha-6-beta-4/CHRNA6-CHRNB4. The protein is Alpha-conotoxin TxID of Conus textile (Cloth-of-gold cone).